The primary structure comprises 157 residues: Phosphopantetheine adenylyltransferase (157 aa).

Residue Ser-9 coordinates substrate. ATP-binding positions include 9–10 and His-17; that span reads SF. Substrate is bound by residues Lys-41, Leu-74, and Lys-88. Residues 89-91, Glu-99, and 123-129 each bind ATP; these read GLR and YTHVSSS.

The protein belongs to the bacterial CoaD family. Homohexamer. Requires Mg(2+) as cofactor.

The protein localises to the cytoplasm. The enzyme catalyses (R)-4'-phosphopantetheine + ATP + H(+) = 3'-dephospho-CoA + diphosphate. It participates in cofactor biosynthesis; coenzyme A biosynthesis; CoA from (R)-pantothenate: step 4/5. Its function is as follows. Reversibly transfers an adenylyl group from ATP to 4'-phosphopantetheine, yielding dephospho-CoA (dPCoA) and pyrophosphate. This chain is Phosphopantetheine adenylyltransferase, found in Micrococcus luteus (strain ATCC 4698 / DSM 20030 / JCM 1464 / CCM 169 / CCUG 5858 / IAM 1056 / NBRC 3333 / NCIMB 9278 / NCTC 2665 / VKM Ac-2230) (Micrococcus lysodeikticus).